The following is a 165-amino-acid chain: SsrA-binding protein (165 aa).

Belongs to the SmpB family.

The protein localises to the cytoplasm. Required for rescue of stalled ribosomes mediated by trans-translation. Binds to transfer-messenger RNA (tmRNA), required for stable association of tmRNA with ribosomes. tmRNA and SmpB together mimic tRNA shape, replacing the anticodon stem-loop with SmpB. tmRNA is encoded by the ssrA gene; the 2 termini fold to resemble tRNA(Ala) and it encodes a 'tag peptide', a short internal open reading frame. During trans-translation Ala-aminoacylated tmRNA acts like a tRNA, entering the A-site of stalled ribosomes, displacing the stalled mRNA. The ribosome then switches to translate the ORF on the tmRNA; the nascent peptide is terminated with the 'tag peptide' encoded by the tmRNA and targeted for degradation. The ribosome is freed to recommence translation, which seems to be the essential function of trans-translation. This Ruthia magnifica subsp. Calyptogena magnifica protein is SsrA-binding protein.